Consider the following 185-residue polypeptide: Ribose 1,5-bisphosphate phosphokinase PhnN (185 aa).

An ATP-binding site is contributed by 10–17; sequence GPSGSGKD.

It belongs to the ribose 1,5-bisphosphokinase family.

It catalyses the reaction alpha-D-ribose 1,5-bisphosphate + ATP = 5-phospho-alpha-D-ribose 1-diphosphate + ADP. The protein operates within metabolic intermediate biosynthesis; 5-phospho-alpha-D-ribose 1-diphosphate biosynthesis; 5-phospho-alpha-D-ribose 1-diphosphate from D-ribose 5-phosphate (route II): step 3/3. Functionally, catalyzes the phosphorylation of ribose 1,5-bisphosphate to 5-phospho-D-ribosyl alpha-1-diphosphate (PRPP). The sequence is that of Ribose 1,5-bisphosphate phosphokinase PhnN from Pseudomonas paraeruginosa (strain DSM 24068 / PA7) (Pseudomonas aeruginosa (strain PA7)).